Consider the following 220-residue polypeptide: Protein GrpE (220 aa).

Positions 1 to 55 (MCGGDVQGQGVASGCDEALERADSLRASDPVPVESGEGSVPGEHSQELETGASEE) are disordered.

The protein belongs to the GrpE family. In terms of assembly, homodimer.

The protein resides in the cytoplasm. Functionally, participates actively in the response to hyperosmotic and heat shock by preventing the aggregation of stress-denatured proteins, in association with DnaK and GrpE. It is the nucleotide exchange factor for DnaK and may function as a thermosensor. Unfolded proteins bind initially to DnaJ; upon interaction with the DnaJ-bound protein, DnaK hydrolyzes its bound ATP, resulting in the formation of a stable complex. GrpE releases ADP from DnaK; ATP binding to DnaK triggers the release of the substrate protein, thus completing the reaction cycle. Several rounds of ATP-dependent interactions between DnaJ, DnaK and GrpE are required for fully efficient folding. The sequence is that of Protein GrpE from Treponema pallidum (strain Nichols).